The sequence spans 239 residues: Cyclo(L-leucyl-L-phenylalanyl) synthase (239 aa).

Residue S37 is the Nucleophile of the active site. Residues N40, 178 to 182 (YVLAE), and Y202 each bind substrate.

It belongs to the CDPS family. As to quaternary structure, monomer.

It catalyses the reaction L-phenylalanyl-tRNA(Phe) + L-leucyl-tRNA(Leu) = cyclo(L-phenylalanyl-L-leucyl) + tRNA(Phe) + tRNA(Leu) + H(+). Involved in the biosynthesis of albonoursin (cyclo[(alpha,beta-dehydro-Phe)-(alpha,beta-dehydro-Leu)]), an antibacterial peptide. It uses activated amino acids in the form of aminoacyl-tRNAs (aa-tRNAs) as substrates to catalyze the ATP-independent formation of cyclodipeptides which are intermediates in diketopiperazine (DKP) biosynthetic pathways. Catalyzes the formation of cyclo(L-Phe-L-Leu) (cFL) as major products from L-L-phenylalanyl-tRNA(Phe) and L-leucyl-tRNA(Leu). AlbC can also incorporate various nonpolar residues, such as L-phenylalanine, L-leucine, L-tyrosine and L-methionine, and to a much lesser extent L-alanine and L-valine, into cyclodipeptides. Indeed, ten possible cyclodipeptides composed of L-phenylalanine, L-leucine, L-tyrosine and L-methionine are all synthesized to detectable amounts by AlbC. This chain is Cyclo(L-leucyl-L-phenylalanyl) synthase (albC), found in Streptomyces noursei (Streptomyces albulus).